Consider the following 408-residue polypeptide: MAENFVVVDGGVVAPKGFKANGHKDRKYGAALIYSEADAVAAGVFTTNKVYAHPVALSKDTLVNNNVFRAIVANSGNANCFTKGGMEDAELLVKKAAELLKIPENQVLSASTGVIGRKMPMDIISLEVERAFENITMESSNENASKAIMTTDAFPKTVAVEFEVNGKSVRIGGIAKGAGMIAPNMLHATMLGFITTDIEISKEDLTNSLQKATDESFNNAVVDGDMSTNDTVYVLANAQSGVKYTDCKEEFDHALTYVSKELAKMIVSDGEGAKKLIEATVFGAETKEDAKKASMSIVRSLLLKTAVFGADPNWGRIAAAVGYSGAEMDMNNFDIIISDISSEKQAILVKAGEQIADCGTPELKLAEEIMKEDKIKIIVDLKMGSFENTAFGCDLGYDYVKINSEYTT.

Positions 150, 176, 189, 271, 403, and 408 each coordinate substrate. The active-site Nucleophile is the Thr-189.

The protein belongs to the ArgJ family. In terms of assembly, heterotetramer of two alpha and two beta chains.

It is found in the cytoplasm. The enzyme catalyses N(2)-acetyl-L-ornithine + L-glutamate = N-acetyl-L-glutamate + L-ornithine. The protein operates within amino-acid biosynthesis; L-arginine biosynthesis; L-ornithine and N-acetyl-L-glutamate from L-glutamate and N(2)-acetyl-L-ornithine (cyclic): step 1/1. Its function is as follows. Catalyzes the transfer of the acetyl group from N(2)-acetylornithine to glutamate, forming N-acetylglutamate and L-ornithine. The chain is Glutamate N-acetyltransferase from Methanococcus maripaludis (strain DSM 14266 / JCM 13030 / NBRC 101832 / S2 / LL).